A 250-amino-acid chain; its full sequence is tRNA-specific adenosine deaminase subunit TAD2 (250 aa).

The CMP/dCMP-type deaminase domain maps to 1 to 119 (MQHIKHMRTA…ERFGGNGTVL (119 aa)). A Zn(2+)-binding site is contributed by histidine 54. Glutamate 56 (proton donor) is an active-site residue. Zn(2+) is bound by residues cysteine 88 and cysteine 91.

Belongs to the cytidine and deoxycytidylate deaminase family. ADAT2 subfamily. As to quaternary structure, heterodimer with TAD3. Zn(2+) serves as cofactor.

It is found in the cytoplasm. It localises to the nucleus. The catalysed reaction is adenosine(34) in tRNA + H2O + H(+) = inosine(34) in tRNA + NH4(+). Its function is as follows. Structural subunit of tRNA-specific adenosine deaminase, which deaminates adenosine-34 (the first, also called wobble position of the anticodon) to inosine in many tRNAs. Inosine-34 allows the decoding of 3 different nucleotides at the third position of mRNA codons, as inosine is able to pair with U, C, and A. The protein is tRNA-specific adenosine deaminase subunit TAD2 (TAD2) of Saccharomyces cerevisiae (strain ATCC 204508 / S288c) (Baker's yeast).